A 59-amino-acid chain; its full sequence is Large ribosomal subunit protein bL33 (59 aa).

The protein belongs to the bacterial ribosomal protein bL33 family.

This Neorickettsia sennetsu (strain ATCC VR-367 / Miyayama) (Ehrlichia sennetsu) protein is Large ribosomal subunit protein bL33.